We begin with the raw amino-acid sequence, 511 residues long: Glucans biosynthesis protein G (511 aa).

Positions 1–22 are cleaved as a signal peptide; sequence MMKMRWLSAAVMLTLYTSSSWA.

Belongs to the OpgD/OpgG family.

The protein localises to the periplasm. It participates in glycan metabolism; osmoregulated periplasmic glucan (OPG) biosynthesis. Involved in the biosynthesis of osmoregulated periplasmic glucans (OPGs). This is Glucans biosynthesis protein G from Escherichia coli O81 (strain ED1a).